A 231-amino-acid polypeptide reads, in one-letter code: MIP18 family protein YHR122W (231 aa).

Disordered stretches follow at residues 1-26 (MSEF…DSTK) and 75-100 (LTSD…EEEE). Residue Ser2 is modified to N-acetylserine. Residues 76-90 (TSDEDSLPAESEDES) show a composition bias toward acidic residues.

This sequence belongs to the MIP18 family.

May play a role in chromosome segregation through establishment of sister chromatid cohesion. In Saccharomyces cerevisiae (strain ATCC 204508 / S288c) (Baker's yeast), this protein is MIP18 family protein YHR122W.